Consider the following 454-residue polypeptide: Phosphoglucosamine mutase (454 aa).

The Phosphoserine intermediate role is filled by S101. 4 residues coordinate Mg(2+): S101, D243, D245, and D247. A Phosphoserine modification is found at S101.

Belongs to the phosphohexose mutase family. It depends on Mg(2+) as a cofactor. In terms of processing, activated by phosphorylation.

It carries out the reaction alpha-D-glucosamine 1-phosphate = D-glucosamine 6-phosphate. Catalyzes the conversion of glucosamine-6-phosphate to glucosamine-1-phosphate. In Geobacter sp. (strain M21), this protein is Phosphoglucosamine mutase.